We begin with the raw amino-acid sequence, 128 residues long: uncharacterized protein (128 aa).

Transmembrane regions (helical) follow at residues 30 to 50 (ILFT…LGSS), 65 to 85 (VFRG…LGIQ), and 93 to 113 (WEVA…PDIV).

It is found in the cell membrane. This is an uncharacterized protein from Rickettsia prowazekii (strain Madrid E).